A 644-amino-acid chain; its full sequence is Coiled-coil domain-containing protein 22 homolog (644 aa).

A disordered region spans residues 316–341 (DEQKAAAMAGLSESGPPKMDTEEELQ). Coiled-coil stretches lie at residues 333 to 383 (KMDT…NEQV), 409 to 486 (DAEN…GKDD), and 592 to 644 (GVIM…LKSS).

This sequence belongs to the CCDC22 family.

This chain is Coiled-coil domain-containing protein 22 homolog, found in Nematostella vectensis (Starlet sea anemone).